A 171-amino-acid chain; its full sequence is uncharacterized protein (171 aa).

A signal peptide spans 1-20; it reads MRRVLFSCFCGLLWSSSGWA. Cys-40 and Cys-80 are oxidised to a cystine.

It belongs to the fimbrial protein family.

Its subcellular location is the fimbrium. Its function is as follows. Part of the sfmACDHF fimbrial operon. Could contribute to adhesion to various surfaces in specific environmental niches. Increases adhesion to eukaryotic T24 bladder epithelial cells in the absence of fim genes. This is an uncharacterized protein from Escherichia coli (strain K12).